A 690-amino-acid polypeptide reads, in one-letter code: MGVRQQLALLLLLLLLLWGLGQPVWPVAVALTLRWLLGDPTCCVLLGLAMLARPWLGPWVPHGLSLAAAALALTLLPARLPPGLRWLPADVIFLAKILHLGLKIRGCLSRQPPDTFVDAFERRARAQPGRALLVWTGPGAGSVTFGELDARACQAAWALKAELGDPASLCAGEPTALLVLASQAVPALCMWLGLAKLGCPTAWINPHGRGMPLAHSVLSSGARVLVVDPDLRESLEEILPKLQAENIRCFYLSHTSPTPGVGALGAALDAAPSHPVPADLRAGITWRSPALFIYTSGTTGLPKPAILTHERVLQMSKMLSLSGATADDVVYTVLPLYHVMGLVVGILGCLDLGATCVLAPKFSTSCFWDDCRQHGVTVILYVGELLRYLCNIPQQPEDRTHTVRLAMGNGLRADVWETFQQRFGPIRIWEVYGSTEGNMGLVNYVGRCGALGKMSCLLRMLSPFELVQFDMEAAEPVRDNQGFCIPVGLGEPGLLLTKVVSQQPFVGYRGPRELSERKLVRNVRQSGDVYYNTGDVLAMDREGFLYFRDRLGDTFRWKGENVSTHEVEGVLSQVDFLQQVNVYGVCVPGCEGKVGMAAVQLAPGQTFDGEKLYQHVRAWLPAYATPHFIRIQDAMEVTSTFKLMKTRLVREGFNVGIVVDPLFVLDNRAQSFRPLTAEMYQAVCEGTWRL.

At 1–30 (MGVRQQLALLLLLLLLLWGLGQPVWPVAVA) the chain is on the cytoplasmic side. The next 2 membrane-spanning stretches (helical) occupy residues 31–51 (LTLRWLLGDPTCCVLLGLAML) and 56–76 (LGPWVPHGLSLAAAALALTLL). Over 77–690 (PARLPPGLRW…QAVCEGTWRL (614 aa)) the chain is Cytoplasmic. AMP is bound at residue 292 to 303 (FIYTSGTTGLPK). Ser501 is subject to Phosphoserine.

The protein belongs to the ATP-dependent AMP-binding enzyme family. As to expression, predominantly expressed in liver.

The protein localises to the endoplasmic reticulum membrane. The protein resides in the microsome. It is found in the cell membrane. The enzyme catalyses a fatty acid(in) = a fatty acid(out). It carries out the reaction cholate + ATP + CoA = choloyl-CoA + AMP + diphosphate. It catalyses the reaction chenodeoxycholate + ATP + CoA = chenodeoxycholoyl-CoA + AMP + diphosphate. The catalysed reaction is deoxycholate + ATP + CoA = deoxycholoyl-CoA + AMP + diphosphate. The enzyme catalyses lithocholate + ATP + CoA = lithocholoyl-CoA + AMP + diphosphate. It carries out the reaction (25R)-3alpha,7alpha,12alpha-trihydroxy-5beta-cholestan-26-oate + ATP + CoA = (25R)-3alpha,7alpha,12alpha-trihydroxy-5beta-cholestan-26-oyl-CoA + AMP + diphosphate. It catalyses the reaction a very long-chain fatty acid + ATP + CoA = a very long-chain fatty acyl-CoA + AMP + diphosphate. The catalysed reaction is tetracosanoate + ATP + CoA = tetracosanoyl-CoA + AMP + diphosphate. The enzyme catalyses hexacosanoate + ATP + CoA = hexacosanoyl-CoA + AMP + diphosphate. It carries out the reaction a long-chain fatty acid + ATP + CoA = a long-chain fatty acyl-CoA + AMP + diphosphate. It catalyses the reaction octadecanoate + ATP + CoA = octadecanoyl-CoA + AMP + diphosphate. The catalysed reaction is eicosanoate + ATP + CoA = eicosanoyl-CoA + AMP + diphosphate. Its activity is regulated as follows. 3-alpha,7-alpha,12-alpha-trihydroxy-5-beta-cholestanate (THCA) inhibits the activation of cholate. May mediate the import of long-chain fatty acids (LCFA) by facilitating their transport across cell membranes. Also catalyzes the ATP-dependent formation of fatty acyl-CoA using LCFA and very-long-chain fatty acids (VLCFA) as substrates. Mainly functions as a bile acyl-CoA synthetase catalyzing the activation of bile acids via ATP-dependent formation of bile acid CoA thioesters which is necessary for their subsequent conjugation with glycine or taurine. Both primary bile acids (cholic acid and chenodeoxycholic acid) and secondary bile acids (deoxycholic acid and lithocholic acid) are the principal substrates. In vitro, activates 3-alpha,7-alpha,12-alpha-trihydroxy-5-beta-cholestanate ((25R)-3alpha,7alpha,12alpha-trihydroxy-5beta-cholestan-26-oate or THCA), the C27 precursor of cholic acid deriving from the de novo synthesis from cholesterol. Plays an important role in hepatic fatty acid uptake and bile acid reconjugation and recycling but not in de novo synthesis of bile acids. This is Long-chain fatty acid transport protein 5 (SLC27A5) from Homo sapiens (Human).